The chain runs to 352 residues: Molybdenum import ATP-binding protein ModC (352 aa).

Residues Met1–Glu229 form the ABC transporter domain. Position 31–38 (Gly31–Thr38) interacts with ATP. In terms of domain architecture, Mop spans Gln289–Ala352.

This sequence belongs to the ABC transporter superfamily. Molybdate importer (TC 3.A.1.8) family. The complex is composed of two ATP-binding proteins (ModC), two transmembrane proteins (ModB) and a solute-binding protein (ModA).

Its subcellular location is the cell inner membrane. It catalyses the reaction molybdate(out) + ATP + H2O = molybdate(in) + ADP + phosphate + H(+). Functionally, part of the ABC transporter complex ModABC involved in molybdenum import. Responsible for energy coupling to the transport system. In Salmonella typhi, this protein is Molybdenum import ATP-binding protein ModC.